The sequence spans 82 residues: Small ribosomal subunit protein bS18 (82 aa).

A disordered region spans residues 1–20; that stretch reads MVDINQIPTRRPFHRRRKTC.

This sequence belongs to the bacterial ribosomal protein bS18 family. Part of the 30S ribosomal subunit. Forms a tight heterodimer with protein bS6.

Functionally, binds as a heterodimer with protein bS6 to the central domain of the 16S rRNA, where it helps stabilize the platform of the 30S subunit. This is Small ribosomal subunit protein bS18 from Brucella anthropi (strain ATCC 49188 / DSM 6882 / CCUG 24695 / JCM 21032 / LMG 3331 / NBRC 15819 / NCTC 12168 / Alc 37) (Ochrobactrum anthropi).